The sequence spans 351 residues: Protein RecA (351 aa).

68 to 75 (GPESSGKT) provides a ligand contact to ATP.

The protein belongs to the RecA family.

The protein localises to the cytoplasm. Can catalyze the hydrolysis of ATP in the presence of single-stranded DNA, the ATP-dependent uptake of single-stranded DNA by duplex DNA, and the ATP-dependent hybridization of homologous single-stranded DNAs. It interacts with LexA causing its activation and leading to its autocatalytic cleavage. The polypeptide is Protein RecA (Chloroflexus aggregans (strain MD-66 / DSM 9485)).